Consider the following 61-residue polypeptide: Large ribosomal subunit protein eL37 (61 aa).

Positions 20, 23, 35, and 38 each coordinate Zn(2+). A C4-type zinc finger spans residues 20–38 (CPRCGRHSYNIVKGYCAAC).

It belongs to the eukaryotic ribosomal protein eL37 family. Zn(2+) is required as a cofactor.

Binds to the 23S rRNA. The sequence is that of Large ribosomal subunit protein eL37 from Caldivirga maquilingensis (strain ATCC 700844 / DSM 13496 / JCM 10307 / IC-167).